The sequence spans 195 residues: Probable GTP-binding protein EngB (195 aa).

The EngB-type G domain maps to 24–195 (GLTEVALSGR…EIWNFIETYI (172 aa)). GTP is bound by residues 32-39 (GRSNVGKS), 59-63 (GKTQT), 77-80 (DVPG), 144-147 (TKED), and 176-178 (YSS). 2 residues coordinate Mg(2+): serine 39 and threonine 61.

The protein belongs to the TRAFAC class TrmE-Era-EngA-EngB-Septin-like GTPase superfamily. EngB GTPase family. Mg(2+) serves as cofactor.

Functionally, necessary for normal cell division and for the maintenance of normal septation. The chain is Probable GTP-binding protein EngB from Staphylococcus epidermidis (strain ATCC 35984 / DSM 28319 / BCRC 17069 / CCUG 31568 / BM 3577 / RP62A).